The following is a 243-amino-acid chain: Tyrosine recombinase XerD-like (243 aa).

The Core-binding (CB) domain maps to M1–Y72. In terms of domain architecture, Tyr recombinase spans L85 to R243. Residues K149 and R210 contribute to the active site. Y242 serves as the catalytic O-(3'-phospho-DNA)-tyrosine intermediate.

This sequence belongs to the 'phage' integrase family. XerD-like subfamily.

The protein resides in the cytoplasm. Putative tyrosine recombinase. Not involved in the cutting and rejoining of the recombining DNA molecules on dif(SL) site. This Streptococcus sanguinis (strain SK36) protein is Tyrosine recombinase XerD-like.